Reading from the N-terminus, the 493-residue chain is Monocarboxylate transporter 1 (493 aa).

The Cytoplasmic portion of the chain corresponds to 1–22; it reads MPPAIGGPVGYTPPDGGWGWAV. A helical transmembrane segment spans residues 23–44; the sequence is LVGAFISIGFSYAFPKSITVFF. Lys-38 provides a ligand contact to (S)-lactate. Over 45-55 the chain is Extracellular; sequence KEIEVIFSATT. The chain crosses the membrane as a helical span at residues 56-80; it reads SEVSWISSIMLAVMYAGGPISSILV. The Cytoplasmic portion of the chain corresponds to 81-84; it reads NKYG. A helical membrane pass occupies residues 85–105; sequence SRPVMIAGGCLSGCGLIAASF. Residues 106–109 lie on the Extracellular side of the membrane; it reads CNTV. Residues 110–132 traverse the membrane as a helical segment; sequence QELYLCIGVIGGLGLAFNLNPAL. At 133-146 the chain is on the cytoplasmic side; sequence TMIGKYFYKKRPLA. A helical transmembrane segment spans residues 147-169; that stretch reads NGLAMAGSPVFLSTLAPLNQAFF. At 170–174 the chain is on the extracellular side; it reads DIFDW. A helical transmembrane segment spans residues 175–194; that stretch reads RGSFLILGGLLLNCCVAGSL. Over 195 to 254 the chain is Cytoplasmic; sequence MRPIGPEQVKLEKLKSKESLQEAGKSDANTDLIGGSPKGEKLSVFQTINKFLDLSLFTHR. Ser-210, Ser-213, and Ser-220 each carry phosphoserine. Phosphothreonine is present on Thr-224. Ser-230 carries the phosphoserine modification. Residues 255–281 traverse the membrane as a helical segment; it reads GFLLYLSGNVVMFFGLFTPLVFLSSYG. Residues 282 to 288 lie on the Extracellular side of the membrane; sequence KSKDFSS. The helical transmembrane segment at 289–310 threads the bilayer; it reads EKSAFLLSILAFVDMVARPSMG. Asp-302 serves as a coordination point for H(+). Arg-306 is a binding site for (S)-lactate. Residues 311–321 are Cytoplasmic-facing; sequence LAANTKWIRPR. A helical membrane pass occupies residues 322 to 342; that stretch reads IQYFFAASVVANGVCHLLAPL. Residues 343–346 lie on the Extracellular side of the membrane; it reads STTY. The helical transmembrane segment at 347 to 368 threads the bilayer; sequence VGFCVYAGVFGFAFGWLSSVLF. The Cytoplasmic portion of the chain corresponds to 369–382; that stretch reads ETLMDLIGPQRFSS. The helical transmembrane segment at 383-403 threads the bilayer; sequence AVGLVTIVECCPVLLGPPLLG. At 404-414 the chain is on the extracellular side; that stretch reads RLNDMYGDYKY. The helical transmembrane segment at 415–436 threads the bilayer; it reads TYWACGVILIIAGIYLFIGMGI. At 437–493 the chain is on the cytoplasmic side; it reads NYRLLAKEQKAEEKQKREGKEDEASTDVDEKPKETMKAAQSPQQHSSGDPTEEESPV. The segment covering 447–472 has biased composition (basic and acidic residues); it reads AEEKQKREGKEDEASTDVDEKPKETM. Positions 447-493 are disordered; sequence AEEKQKREGKEDEASTDVDEKPKETMKAAQSPQQHSSGDPTEEESPV. Ser-461 bears the Phosphoserine mark. The residue at position 462 (Thr-462) is a Phosphothreonine. The segment covering 474–485 has biased composition (polar residues); sequence AAQSPQQHSSGD. Phosphoserine occurs at positions 477, 482, 483, and 491.

The protein belongs to the major facilitator superfamily. Monocarboxylate porter (TC 2.A.1.13) family. In terms of assembly, interacts with isoform 2 of BSG; interaction mediates SLC16A1 targeting to the plasma membrane. Interacts with EMB; interaction mediates SLC16A1 targeting to the plasma membrane. Detected in liver, brain, spinal cord, spermatozoa, muscle, white adipose tissue and brown adipose tissue (at protein level). Widely expressed, except in pancreas, where expression is not detectable.

The protein localises to the cell membrane. It localises to the basolateral cell membrane. It is found in the apical cell membrane. The enzyme catalyses (S)-lactate(in) + H(+)(in) = (S)-lactate(out) + H(+)(out). It catalyses the reaction acetate(out) + H(+)(out) = acetate(in) + H(+)(in). It carries out the reaction acetoacetate(out) + H(+)(out) = acetoacetate(in) + H(+)(in). The catalysed reaction is pyruvate(out) + H(+)(out) = pyruvate(in) + H(+)(in). The enzyme catalyses (R)-3-hydroxybutanoate(out) + H(+)(out) = (R)-3-hydroxybutanoate(in) + H(+)(in). It catalyses the reaction 3-methyl-2-oxobutanoate(out) + H(+)(out) = 3-methyl-2-oxobutanoate(in) + H(+)(in). It carries out the reaction 4-methyl-2-oxopentanoate(out) + H(+)(out) = 4-methyl-2-oxopentanoate(in) + H(+)(in). The catalysed reaction is succinate(in) + 2 H(+)(in) = succinate(out) + 2 H(+)(out). In terms of biological role, bidirectional proton-coupled monocarboxylate transporter. Catalyzes the rapid transport across the plasma membrane of many monocarboxylates such as lactate, pyruvate, acetate and the ketone bodies acetoacetate and beta-hydroxybutyrate, and thus contributes to the maintenance of intracellular pH. The transport direction is determined by the proton motive force and the concentration gradient of the substrate monocarboxylate. MCT1 is a major lactate exporter. Plays a role in cellular responses to a high-fat diet by modulating the cellular levels of lactate and pyruvate that contribute to the regulation of central metabolic pathways and insulin secretion, with concomitant effects on plasma insulin levels and blood glucose homeostasis. Facilitates the protonated monocarboxylate form of succinate export, that its transient protonation upon muscle cell acidification in exercising muscle and ischemic heart. Functions via alternate outward- and inward-open conformation states. Protonation and deprotonation of 302-Asp is essential for the conformational transition. This is Monocarboxylate transporter 1 (Slc16a1) from Mus musculus (Mouse).